We begin with the raw amino-acid sequence, 997 residues long: Signal peptide, CUB and EGF-like domain-containing protein 2 (997 aa).

An N-terminal signal peptide occupies residues 1–28 (MGVAGCGRPREARALLLLLLLLPPLLAA). One can recognise an EGF-like 1; calcium-binding domain in the interval 43 to 83 (DVDECAQGLDDCHADALCQNTPTSYKCSCKPGYQGEGRQCE). 8 disulfides stabilise this stretch: Cys47-Cys60, Cys54-Cys69, Cys71-Cys82, Cys88-Cys100, Cys96-Cys109, Cys111-Cys124, Cys130-Cys141, and Cys137-Cys150. Residues 84–125 (DMDECDNTLNGGCVHDCLNIPGNYRCTCFDGFMLAHDGHNCL) enclose the EGF-like 2; calcium-binding domain. An EGF-like 3; calcium-binding domain is found at 126–162 (DMDECLENNGGCQHICTNVIGSYECRCKEGFFLSDNQ). EGF-like domains follow at residues 175-211 (CMNKDHGCGHICKEAPRGSVACECRPGFELAKNQKDC), 215-250 (CNHGNGGCQHSCEDTAEGPECSCHPRYRLHADGRSC), and 284-319 (CAVNNGGCDRTCKDTSTGVHCSCPTGFTLQVDGKTC). One can recognise an EGF-like 7; calcium-binding domain in the interval 321–361 (DIDECQTRNGGCNHFCKNTVGSFDCSCKKGFKLLTDEKSCQ). 9 disulfides stabilise this stretch: Cys325/Cys336, Cys332/Cys345, Cys347/Cys360, Cys366/Cys376, Cys372/Cys385, Cys387/Cys399, Cys405/Cys416, Cys412/Cys425, and Cys427/Cys440. Positions 362 to 400 (DVDECSLERTCDHSCINHPGTFICACNPGYTLYSFTHCG) constitute an EGF-like 8; calcium-binding domain. Positions 401–441 (DTNECSVNNGGCQQVCINTVGSYECQCHPGFKLHWNKKDCV) constitute an EGF-like 9; calcium-binding domain. N-linked (GlcNAc...) asparagine glycosylation occurs at Asn657. A disulfide bond links Cys807 and Cys833. The CUB domain occupies 807-919 (CGGELGDFTG…RGFQVPYVTY (113 aa)). The interaction with the cholesterol-anchor of SHH stretch occupies residues 845 to 854 (ILIVVPEIFL). A disulfide bond links Cys860 and Cys881.

As to quaternary structure, interacts with SHH via the cholesterol anchor of the dually lipid-modified SHH (ShhNp). Interacts with PTCH1. Forms homooligomers and heterooligomers with SCUBE1 and SCUBE3. Interacts with VEGFR2. In terms of processing, N-glycosylated. Expressed in adult heart, lung and testis.

It is found in the secreted. It localises to the cell surface. In terms of biological role, lipid-binding protein required for SHH long-range signaling by binding to the dually lipid-modified SHH (ShhNp) and by promoting ShhNp mobilization, solubilization and release from the cell membrane. Acts by enhancing the proteolytic processing (shedding) of the lipid-modified N- and C- terminal of ShhNp at the cell surface. Synergizes with DISP1 to cause an increase in SHH secretion. Probable cell surface coreceptor for VEGFR2 involved in VEGFR2-mediated angiogenesis. The chain is Signal peptide, CUB and EGF-like domain-containing protein 2 from Mus musculus (Mouse).